The chain runs to 204 residues: Salt stress root protein RS1 (204 aa).

The segment at 128–204 is disordered; it reads FVPKEEPKPE…AAPAAEPEKQ (77 aa). The span at 147–161 shows a compositional bias: basic and acidic residues; it reads TSREVAVEEEKKEEE. Over residues 164 to 180 the composition is skewed to low complexity; that stretch reads PAEPAAAAAEAAAPSTE. Basic and acidic residues predominate over residues 182–192; it reads VEEKKEEEKPA. Residues 193–204 are compositionally biased toward low complexity; that stretch reads EAAAPAAEPEKQ.

This sequence belongs to the DREPP family.

This chain is Salt stress root protein RS1, found in Oryza sativa subsp. indica (Rice).